The primary structure comprises 316 residues: L-lactate dehydrogenase (316 aa).

NAD(+)-binding positions include valine 15, aspartate 37, lysine 42, tyrosine 68, and 82–83; that span reads GL. Substrate-binding positions include glutamine 85, arginine 91, and 123-126; that span reads NPVD. NAD(+) is bound by residues 121-123 and threonine 146; that span reads ASN. Substrate is bound at residue 151 to 154; it reads DTSR. Beta-D-fructose 1,6-bisphosphate-binding residues include arginine 156 and histidine 171. The active-site Proton acceptor is the histidine 178. Tyrosine 222 is subject to Phosphotyrosine. Residue threonine 231 participates in substrate binding.

This sequence belongs to the LDH/MDH superfamily. LDH family. Homotetramer.

The protein localises to the cytoplasm. The catalysed reaction is (S)-lactate + NAD(+) = pyruvate + NADH + H(+). It participates in fermentation; pyruvate fermentation to lactate; (S)-lactate from pyruvate: step 1/1. Allosterically activated by fructose 1,6-bisphosphate (FBP). Its function is as follows. Catalyzes the conversion of lactate to pyruvate. The protein is L-lactate dehydrogenase of Borrelia turicatae (strain 91E135).